We begin with the raw amino-acid sequence, 298 residues long: uncharacterized protein (298 aa).

It belongs to the glycosyltransferase 2 family.

This is an uncharacterized protein from Mycoplasma genitalium (strain ATCC 33530 / DSM 19775 / NCTC 10195 / G37) (Mycoplasmoides genitalium).